A 177-amino-acid chain; its full sequence is MGFLTTIVACFITFAILIHSSKAQNSPQDYLNPHNAARRQVGVGPMTWDNRLAAYAQNYANQRIGDCGMIHSHGPYGENLAAAFPQLNAAGAVKMWVDEKRFYDYNSNSCVGGVCGHYTQVVWRNSVRLGCARVRSNNGWFFITCNYDPPGNFIGQRPFGDLEEQPFDSKLELPTDV.

An N-terminal signal peptide occupies residues Met1–Ala23. Pyrrolidone carboxylic acid is present on Gln24. In terms of domain architecture, SCP spans Leu31 to Tyr147.

Belongs to the CRISP family. Two disulfide bonds are present.

Functionally, probably involved in the defense reaction of plants against pathogens. This is Basic form of pathogenesis-related protein 1 from Nicotiana tabacum (Common tobacco).